The following is a 58-amino-acid chain: Small ribosomal subunit protein uS14 (58 aa).

The disordered stretch occupies residues 1–21; that stretch reads MSESETEQTGEHASHRTGQTH. Over residues 9-21 the composition is skewed to basic and acidic residues; it reads TGEHASHRTGQTH. The Zn(2+) site is built by Cys-23, Cys-26, Cys-41, and Cys-44.

It belongs to the universal ribosomal protein uS14 family. Zinc-binding uS14 subfamily. In terms of assembly, part of the 30S ribosomal subunit. Zn(2+) is required as a cofactor.

In terms of biological role, binds 16S rRNA, required for the assembly of 30S particles. This Haloquadratum walsbyi (strain DSM 16790 / HBSQ001) protein is Small ribosomal subunit protein uS14.